Reading from the N-terminus, the 238-residue chain is Protein LicA homolog (238 aa).

This sequence belongs to the peptidase S49 family.

This is Protein LicA homolog (licA) from Mycoplasma capricolum subsp. capricolum (strain California kid / ATCC 27343 / NCTC 10154).